We begin with the raw amino-acid sequence, 156 residues long: Small ribosomal subunit protein uS7 (156 aa).

This sequence belongs to the universal ribosomal protein uS7 family. In terms of assembly, part of the 30S ribosomal subunit. Contacts proteins S9 and S11.

Functionally, one of the primary rRNA binding proteins, it binds directly to 16S rRNA where it nucleates assembly of the head domain of the 30S subunit. Is located at the subunit interface close to the decoding center, probably blocks exit of the E-site tRNA. This is Small ribosomal subunit protein uS7 from Marinobacter nauticus (strain ATCC 700491 / DSM 11845 / VT8) (Marinobacter aquaeolei).